The primary structure comprises 495 residues: Pentatricopeptide repeat-containing protein PPR5 homolog, chloroplastic (495 aa).

A disordered region spans residues 1–24 (MLAYPTTSSPWPPRHHGAAAAPAA). The transit peptide at 1–29 (MLAYPTTSSPWPPRHHGAAAAPAARRHMA) directs the protein to the chloroplast. PPR repeat units lie at residues 120–154 (DNGI…GCRP), 155–189 (DTSV…MKTI), 195–229 (NIVT…PVSP), 230–264 (DIYT…QCRP), 265–299 (DVIT…KEKP), 300–334 (THPT…GFKP), 335–365 (NYVT…LVSS), 370–404 (HLSS…GAVP), and 405–439 (SAST…GIVP). The segment at 455 to 495 (DKKPRTVPSKNSASKPDVESANNSGTDTSSKPNLSVWQVAA) is disordered. The segment covering 462 to 495 (PSKNSASKPDVESANNSGTDTSSKPNLSVWQVAA) has biased composition (polar residues).

This sequence belongs to the PPR family. P subfamily.

The protein localises to the plastid. It localises to the chloroplast. Involved in the biogenesis of the plastid translation machinery by promoting the splicing of group II introns in chloroplasts. This is Pentatricopeptide repeat-containing protein PPR5 homolog, chloroplastic from Oryza sativa subsp. japonica (Rice).